A 751-amino-acid polypeptide reads, in one-letter code: Conserved oligomeric Golgi complex subunit 5 (751 aa).

Disordered regions lie at residues 1–21 (MVTG…DDND) and 244–263 (SPTH…KTPQ).

Belongs to the COG5 family. Component of the conserved oligomeric Golgi complex which is composed of eight different subunits and is required for normal Golgi morphology and localization.

It is found in the golgi apparatus membrane. Required for normal Golgi function and necessary during spermatogenesis. Required for cleavage furrow ingression during cytokinesis in dividing spermatocytes and for the extensive polarized cell growth that accompanies spermatid elongation. The sequence is that of Conserved oligomeric Golgi complex subunit 5 (fws) from Drosophila melanogaster (Fruit fly).